We begin with the raw amino-acid sequence, 284 residues long: 3-methyl-2-oxobutanoate hydroxymethyltransferase (284 aa).

Residues Asp-52 and Asp-91 each coordinate Mg(2+). 3-methyl-2-oxobutanoate contacts are provided by residues 52–53, Asp-91, and Lys-121; that span reads DS. Glu-123 contributes to the Mg(2+) binding site. Residue Glu-191 is the Proton acceptor of the active site.

This sequence belongs to the PanB family. Homodecamer; pentamer of dimers. The cofactor is Mg(2+).

It localises to the cytoplasm. It catalyses the reaction 3-methyl-2-oxobutanoate + (6R)-5,10-methylene-5,6,7,8-tetrahydrofolate + H2O = 2-dehydropantoate + (6S)-5,6,7,8-tetrahydrofolate. It functions in the pathway cofactor biosynthesis; (R)-pantothenate biosynthesis; (R)-pantoate from 3-methyl-2-oxobutanoate: step 1/2. Functionally, catalyzes the reversible reaction in which hydroxymethyl group from 5,10-methylenetetrahydrofolate is transferred onto alpha-ketoisovalerate to form ketopantoate. The protein is 3-methyl-2-oxobutanoate hydroxymethyltransferase of Deinococcus radiodurans (strain ATCC 13939 / DSM 20539 / JCM 16871 / CCUG 27074 / LMG 4051 / NBRC 15346 / NCIMB 9279 / VKM B-1422 / R1).